The primary structure comprises 2253 residues: Genome polyprotein (2253 aa).

A disulfide bridge connects residues Cys-627 and Cys-694. The short motif at 750 to 752 (RVD) is the Cell attachment site element. The region spanning 825-920 (LVYKNRGFYK…LFPGRKEITQ (96 aa)) is the LRAT domain. Catalysis depends on for protein 2A H-NC residues His-835 and His-846. Cys-904 (for protein 2A H-NC; Acyl-thioester intermediate) is an active-site residue. The helical transmembrane segment at 1002–1022 (IVLYCHAPNMLTTMCLGTLLV) threads the bilayer. The SF3 helicase domain occupies 1205–1366 (YSEMMRVNVR…ASYSRNNKLD (162 aa)). Tyr-1559 carries the O-(5'-phospho-RNA)-tyrosine modification. The Peptidase C3 domain occupies 1586–1775 (APYMQDLEHC…RAAAVHFISN (190 aa)). Residues His-1626, Asp-1664, and Cys-1739 each act as for protease 3C activity in the active site. Cys-1970 (acyl-thioester intermediate) is an active-site residue. In terms of domain architecture, RdRp catalytic spans 2018-2132 (PYNYGLDYSS…SVSSPLDAEY (115 aa)). Residues Asp-2024 and Asp-2118 each coordinate Mg(2+).

This sequence belongs to the picornaviruses polyprotein family. As to quaternary structure, interacts with capsid protein VP1 and capsid protein VP3 to form heterotrimeric protomers. Five protomers subsequently associate to form pentamers which serve as building blocks for the capsid. Interacts with capsid protein VP0, and capsid protein VP3 to form heterotrimeric protomers. Five protomers subsequently associate to form pentamers which serve as building blocks for the capsid. In terms of assembly, interacts with capsid protein VP0 and capsid protein VP1 to form heterotrimeric protomers. Five protomers subsequently associate to form pentamers which serve as building blocks for the capsid. As to quaternary structure, homohexamer; forms a hexameric ring structure with 6-fold symmetry characteristic of AAA+ ATPases. Homodimer. Interacts with host ACBD3. In terms of assembly, interacts with RNA-directed RNA polymerase. As to quaternary structure, interacts with Viral protein genome-linked. Mg(2+) is required as a cofactor. VPg is uridylylated by the polymerase and is covalently linked to the 5'-end of genomic RNA. This uridylylated form acts as a nucleotide-peptide primer for the polymerase. In terms of processing, specific enzymatic cleavages yield mature proteins. All cleavages are catalyzed by P3C.

The protein localises to the virion. Its subcellular location is the host cytoplasm. The protein resides in the host nucleus. It is found in the host nucleolus. It localises to the host cytoplasmic vesicle membrane. The protein localises to the host endoplasmic reticulum membrane. Its subcellular location is the host Golgi apparatus membrane. It carries out the reaction RNA(n) + a ribonucleoside 5'-triphosphate = RNA(n+1) + diphosphate. It catalyses the reaction a ribonucleoside 5'-triphosphate + H2O = a ribonucleoside 5'-diphosphate + phosphate + H(+). The catalysed reaction is Selective cleavage of Gln-|-Gly bond in the poliovirus polyprotein. In other picornavirus reactions Glu may be substituted for Gln, and Ser or Thr for Gly.. In terms of biological role, forms an icosahedral capsid of pseudo T=3 symmetry together with capsid proteins VP1 and VP3. The capsid is 300 Angstroms in diameter, composed of 60 copies of each capsid protein and enclosing the viral positive strand RNA genome. The attachment to the host cell receptor induces virion internalization predominantly through clathrin-mediated endocytosis. Binds packaging signals present in the viral RNA. Its function is as follows. Forms an icosahedral capsid of pseudo T=3 symmetry together with capsid proteins VP0 and VP1. The capsid is 300 Angstroms in diameter, composed of 60 copies of each capsid protein and enclosing the viral positive strand RNA genome. The attachment to the host cell receptor induces virion internalization predominantly through clathrin-mediated endocytosis. Binds packaging signals present in the viral RNA. Functionally, forms an icosahedral capsid of pseudo T=3 symmetry together with capsid proteins VP0 and VP3. The capsid is 300 Angstroms in diameter, composed of 60 copies of each capsid protein and enclosing the viral positive strand RNA genome. The attachment to the host cell receptor induces virion internalization predominantly through clathrin-mediated endocytosis. Binds packaging signals present in the viral RNA. Mediates self-processing of the polyprotein by a translational effect termed 'ribosome skipping'. Mechanistically, 2A1-mediated cleavage occurs between the C-terminal glycine and the proline of the downstream protein 2A2. In terms of biological role, plays an essential role in the virus replication cycle by acting as a viroporin. Creates a pore in the host endoplasmic reticulum and as a consequence releases Ca2+ in the cytoplasm of infected cell. In turn, high levels of cytoplasmic calcium may trigger membrane trafficking and transport of viral ER-associated proteins to viroplasms, sites of viral genome replication. Its function is as follows. Induces and associates with structural rearrangements of intracellular membranes. Displays RNA-binding, nucleotide binding and NTPase activities. May play a role in virion morphogenesis and viral RNA encapsidation by interacting with the capsid protein VP3. Functionally, localizes the viral replication complex to the surface of membranous vesicles. It inhibits host cell endoplasmic reticulum-to-Golgi apparatus transport and causes the disassembly of the Golgi complex, possibly through GBF1 interaction. This would result in depletion of MHC, trail receptors and IFN receptors at the host cell surface. Plays an essential role in viral RNA replication by recruiting ACBD3 and PI4KB at the viral replication sites, thereby allowing the formation of the rearranged membranous structures where viral replication takes place. Acts as a primer for viral RNA replication and remains covalently bound to viral genomic RNA. VPg is uridylylated prior to priming replication into VPg-pUpU. The VPg-pUpU is then used as primer on the genomic RNA poly(A) by the RNA-dependent RNA polymerase to replicate the viral genome. Following genome release from the infecting virion in the cytoplasm, the VPg-RNA linkage is probably removed by host TDP2. During the late stage of the replication cycle, host TDP2 is excluded from sites of viral RNA synthesis and encapsidation, allowing for the generation of progeny virions. In terms of biological role, cysteine protease that generates mature viral proteins from the precursor polyprotein. In addition to its proteolytic activity, it binds to viral RNA, and thus influences viral genome replication. RNA and substrate bind cooperatively to the protease. Its function is as follows. Replicates the viral genomic RNA on the surface of intracellular membranes. Covalently attaches UMP to a tyrosine of VPg, which is used to prime RNA synthesis. The positive stranded RNA genome is first replicated at virus induced membranous vesicles, creating a dsRNA genomic replication form. This dsRNA is then used as template to synthesize positive stranded RNA genomes. ss(+)RNA genomes are either translated, replicated or encapsidated. The sequence is that of Genome polyprotein from Ljunganvirus 1 (LV).